A 229-amino-acid chain; its full sequence is Flavin-dependent thymidylate synthase (229 aa).

The region spanning 1–217 (MEFKVLDKGF…PWTFESFLKF (217 aa)) is the ThyX domain. Residues Thr-55, 78–80 (RHR), and Glu-86 each bind FAD. DUMP-binding positions include 75 to 78 (QWFR), 86 to 90 (EASLR), and Arg-156. The ThyX motif motif lies at 78–88 (RHRIGSFNEAS). FAD contacts are provided by residues 172–174 (NAR) and Asn-178. Arg-183 serves as a coordination point for dUMP. Catalysis depends on Arg-183, which acts as the Involved in ionization of N3 of dUMP, leading to its activation.

Belongs to the thymidylate synthase ThyX family. As to quaternary structure, homotetramer. It depends on FAD as a cofactor.

It carries out the reaction dUMP + (6R)-5,10-methylene-5,6,7,8-tetrahydrofolate + NADPH + H(+) = dTMP + (6S)-5,6,7,8-tetrahydrofolate + NADP(+). It functions in the pathway pyrimidine metabolism; dTTP biosynthesis. Functionally, catalyzes the reductive methylation of 2'-deoxyuridine-5'-monophosphate (dUMP) to 2'-deoxythymidine-5'-monophosphate (dTMP) while utilizing 5,10-methylenetetrahydrofolate (mTHF) as the methyl donor, and NADPH and FADH(2) as the reductant. This Thermosipho melanesiensis (strain DSM 12029 / CIP 104789 / BI429) protein is Flavin-dependent thymidylate synthase.